The following is a 93-amino-acid chain: Defensin-like protein 210 (93 aa).

Residues 1-19 (MKTIILFLTLLVISSSCTS) form the signal peptide. Intrachain disulfides connect Cys63/Cys80, Cys66/Cys85, and Cys70/Cys87.

Belongs to the DEFL family.

It localises to the secreted. This chain is Defensin-like protein 210, found in Arabidopsis thaliana (Mouse-ear cress).